The primary structure comprises 253 residues: Histone H1.4 (253 aa).

Low complexity predominate over residues 1 to 33 (MSDVAVAADTTETPAAPTKASKATKASKATKAS). Residues 1 to 43 (MSDVAVAADTTETPAAPTKASKATKASKATKASKATKAKTTKV) form a disordered region. Ser-2 carries the N-acetylserine modification. One can recognise an H15 domain in the interval 51-127 (AHPPFINMVT…GANGRFRLAE (77 aa)). A disordered region spans residues 134–253 (KSPAAAKKDA…KKAPAAAPEA (120 aa)). Basic and acidic residues-rich tracts occupy residues 139–149 (AKKDATGEKKA) and 188–200 (AAGD…EVKV). Composition is skewed to basic residues over residues 201-210 (KKVKSPKKIA) and 234-244 (APKKAAAKPAK).

The protein belongs to the histone H1/H5 family.

It localises to the nucleus. The protein localises to the chromosome. Histones H1 are necessary for the condensation of nucleosome chains into higher-order structures. In Caenorhabditis elegans, this protein is Histone H1.4 (hil-4).